The chain runs to 238 residues: Small ribosomal subunit protein uS3 (238 aa).

The 70-residue stretch at 39–108 folds into the KH type-2 domain; the sequence is IRKFVKKKLF…NVAVNVIEVK (70 aa).

Belongs to the universal ribosomal protein uS3 family. In terms of assembly, part of the 30S ribosomal subunit. Forms a tight complex with proteins S10 and S14.

In terms of biological role, binds the lower part of the 30S subunit head. Binds mRNA in the 70S ribosome, positioning it for translation. This chain is Small ribosomal subunit protein uS3, found in Alkaliphilus oremlandii (strain OhILAs) (Clostridium oremlandii (strain OhILAs)).